Consider the following 533-residue polypeptide: Phosphatidylinositol 4-kinase gamma 8 (533 aa).

The PI3K/PI4K catalytic domain maps to glycine 101–aspartate 397. Residues leucine 107 to glycine 113 form a G-loop region. ATP-binding positions include proline 108–alanine 114, lysine 129, and glutamine 210–valine 213. Positions leucine 243–asparagine 251 are catalytic loop. An activation loop region spans residues proline 276 to valine 302. Aspartate 278 contacts ATP.

The protein belongs to the PI3/PI4-kinase family. Type II PI4K subfamily.

It catalyses the reaction a 1,2-diacyl-sn-glycero-3-phospho-(1D-myo-inositol) + ATP = a 1,2-diacyl-sn-glycero-3-phospho-(1D-myo-inositol 4-phosphate) + ADP + H(+). Its function is as follows. The phosphorylation of phosphatidylinositol (PI) to PI4P is the first committed step in the generation of phosphatidylinositol 4,5-bisphosphate (PIP2), a precursor of the second messenger inositol 1,4,5-trisphosphate (InsP3). In Arabidopsis thaliana (Mouse-ear cress), this protein is Phosphatidylinositol 4-kinase gamma 8 (PI4KG8).